A 752-amino-acid polypeptide reads, in one-letter code: Ribosomal protein S6 kinase 2 alpha (752 aa).

Residues 80 to 339 enclose the Protein kinase 1 domain; the sequence is FELLKVLGQG…AEEIKRHPFY (260 aa). Residues 86–94 and Lys112 each bind ATP; that span reads LGQGSFGKV. The Proton acceptor role is filled by Asp205. The residue at position 239 (Ser239) is a Phosphoserine. An AGC-kinase C-terminal domain is found at 340–409; it reads STIDWNKLYR…VATGLMEDSK (70 aa). The residue at position 377 (Thr377) is a Phosphothreonine. The residue at position 381 (Ser381) is a Phosphoserine. The residue at position 398 (Ser398) is a Phosphoserine; by autocatalysis. The Protein kinase 2 domain occupies 435–692; it reads YVVKEAIGVG…AKQVLQHPWI (258 aa). ATP is bound by residues 441 to 449 and Lys464; that span reads IGVGSYSVC. Asp552 functions as the Proton acceptor in the catalytic mechanism. Thr590 is subject to Phosphothreonine. Phosphoserine is present on Ser749.

It belongs to the protein kinase superfamily. AGC Ser/Thr protein kinase family. S6 kinase subfamily. Requires Mg(2+) as cofactor. Post-translationally, autophosphorylated on Ser-398, as part of the activation process. In terms of tissue distribution, small and large intestine, spleen, stomach, and bursa, and to a lesser extent lung and kidney.

The catalysed reaction is L-seryl-[protein] + ATP = O-phospho-L-seryl-[protein] + ADP + H(+). It carries out the reaction L-threonyl-[protein] + ATP = O-phospho-L-threonyl-[protein] + ADP + H(+). Its activity is regulated as follows. Activated by multiple phosphorylations on threonine and serine residues. Serine/threonine kinase that may play a role in mediating the growth-factor and stress induced activation of transcription. The chain is Ribosomal protein S6 kinase 2 alpha (RPS6KA) from Gallus gallus (Chicken).